The chain runs to 207 residues: Ras-related protein rab7 (207 aa).

GTP is bound by residues 15–22, 34–40, 63–67, 125–128, and 156–157; these read GDSGVGKT, SNQYKAT, DTAGQ, NKID, and AK. The short motif at 37-45 is the Effector region element; that stretch reads YKATIGADF. 2 S-geranylgeranyl cysteine lipidation sites follow: Cys-205 and Cys-207. At Cys-207 the chain carries Cysteine methyl ester.

This sequence belongs to the small GTPase superfamily. Rab family. (Microbial infection) Interacts with Singapore grouper iridoviral proteins VP69 (ORF69) and VP101 (ORF101). Ubiquitously expressed. Expressed in liver, spleen, kidney, brain, intestine, heart, skin, muscle, gill and stomach.

It localises to the late endosome membrane. The protein resides in the lysosome membrane. Functionally, key regulator in endo-lysosomal trafficking. Governs early-to-late endosomal maturation, microtubule minus-end as well as plus-end directed endosomal migration and positioning, and endosome-lysosome transport through different protein-protein interaction cascades. Plays important roles in microbial pathogen infection and survival, as well as in participating in the life cycle of viruses. This chain is Ras-related protein rab7, found in Epinephelus coioides (Orange-spotted grouper).